The following is a 207-amino-acid chain: Protein GrpE (207 aa).

Positions 1–11 (MTETDGQKDNN) are enriched in basic and acidic residues. Residues 1–40 (MTETDGQKDNNQDTAQAAADPVVSKPYIMPDDPEEGSNEA) are disordered.

This sequence belongs to the GrpE family. As to quaternary structure, homodimer.

The protein resides in the cytoplasm. Participates actively in the response to hyperosmotic and heat shock by preventing the aggregation of stress-denatured proteins, in association with DnaK and GrpE. It is the nucleotide exchange factor for DnaK and may function as a thermosensor. Unfolded proteins bind initially to DnaJ; upon interaction with the DnaJ-bound protein, DnaK hydrolyzes its bound ATP, resulting in the formation of a stable complex. GrpE releases ADP from DnaK; ATP binding to DnaK triggers the release of the substrate protein, thus completing the reaction cycle. Several rounds of ATP-dependent interactions between DnaJ, DnaK and GrpE are required for fully efficient folding. The sequence is that of Protein GrpE from Rhodopseudomonas palustris (strain ATCC BAA-98 / CGA009).